Here is a 324-residue protein sequence, read N- to C-terminus: Acetyl-coenzyme A carboxylase carboxyl transferase subunit alpha (324 aa).

The region spanning 44 to 298 (RFQDKLTKLQ…RKELIKQLNI (255 aa)) is the CoA carboxyltransferase C-terminal domain.

This sequence belongs to the AccA family. Acetyl-CoA carboxylase is a heterohexamer composed of biotin carboxyl carrier protein (accB), biotin carboxylase (accC) and two subunits each of ACCase subunit alpha (accA) and ACCase subunit beta (accD).

It localises to the plastid. It is found in the chloroplast. It carries out the reaction N(6)-carboxybiotinyl-L-lysyl-[protein] + acetyl-CoA = N(6)-biotinyl-L-lysyl-[protein] + malonyl-CoA. The protein operates within lipid metabolism; malonyl-CoA biosynthesis; malonyl-CoA from acetyl-CoA: step 1/1. Component of the acetyl coenzyme A carboxylase (ACC) complex. First, biotin carboxylase catalyzes the carboxylation of biotin on its carrier protein (BCCP) and then the CO(2) group is transferred by the carboxyltransferase to acetyl-CoA to form malonyl-CoA. This chain is Acetyl-coenzyme A carboxylase carboxyl transferase subunit alpha, found in Porphyra purpurea (Red seaweed).